The sequence spans 335 residues: Probable deoxyhypusine synthase (335 aa).

Lys307 acts as the Nucleophile in catalysis.

It belongs to the deoxyhypusine synthase family. NAD(+) serves as cofactor.

It catalyses the reaction [eIF5A protein]-L-lysine + spermidine = [eIF5A protein]-deoxyhypusine + propane-1,3-diamine. The protein operates within protein modification; eIF5A hypusination. In terms of biological role, catalyzes the NAD-dependent oxidative cleavage of spermidine and the subsequent transfer of the butylamine moiety of spermidine to the epsilon-amino group of a specific lysine residue of the eIF-5A precursor protein to form the intermediate deoxyhypusine residue. This is Probable deoxyhypusine synthase (dys) from Pyrococcus abyssi (strain GE5 / Orsay).